An 84-amino-acid polypeptide reads, in one-letter code: uncharacterized protein (84 aa).

The protein belongs to the chlamydial CPn_0711/CT_665/TC_0036 family.

This is an uncharacterized protein from Chlamydia muridarum (strain MoPn / Nigg).